A 465-amino-acid chain; its full sequence is MIVFVRFNSSHGFPVEVDSDTSIFQLKEVVAKRQGVPADQLRVIFAGKELRNDWTVQNCDLDQQSIVHIVQRPWRKGQEMNATGGDDPRNAAGGCEREPQSLTRVDLSSSVLPGDSVGLAVILHTDSRKDSPPAGSPAGRSIYNSFYVYCKGPCQRVQPGKLRVQCSTCRQATLTLTQGPSCWDDVLIPNRMSGECQSPHCPGTSAEFFFKCGAHPTSDKETSVALHLIATNSRNITCITCTDVRSPVLVFQCNSRHVICLDCFHLYCVTRLNDRQFVHDPQLGYSLPCVAGCPNSLIKELHHFRILGEEQYNRYQQYGAEECVLQMGGVLCPRPGCGAGLLPEPDQRKVTCEGGNGLGCGFAFCRECKEAYHEGECSAVFEASGTTTQAYRVDERAAEQARWEAASKETIKKTTKPCPRCHVPVEKNGGCMHMKCPQPQCRLEWCWNCGCEWNRVCMGDHWFDV.

One can recognise a Ubiquitin-like domain in the interval 1-76 (MIVFVRFNSS…VHIVQRPWRK (76 aa)). Position 65 is a phosphoserine; by PINK1 (Ser65). Residues 77-99 (GQEMNATGGDDPRNAAGGCEREP) form a disordered region. The tract at residues 77–237 (GQEMNATGGD…LIATNSRNIT (161 aa)) is necessary for PINK1-dependent localization to mitochondria. Residues 141–225 (SIYNSFYVYC…PTSDKETSVA (85 aa)) form an RING-type 0; atypical zinc finger. The residue at position 175 (Thr175) is a Phosphothreonine; by PINK1. Residues 204–238 (TSAEFFFKCGAHPTSDKETSVALHLIATNSRNITC) are SYT11 binding 1. Thr217 is subject to Phosphothreonine. The tract at residues 234–465 (RNITCITCTD…VCMGDHWFDV (232 aa)) is TRIAD supradomain. The Zn(2+) site is built by Cys238, Cys241, Cys253, His257, Cys260, Cys263, Cys289, Cys293, Cys332, and Cys337. The segment at 238–293 (CITCTDVRSPVLVFQCNSRHVICLDCFHLYCVTRLNDRQFVHDPQLGYSLPCVAGC) adopts an RING-type 1 zinc-finger fold. The tract at residues 257–293 (HVICLDCFHLYCVTRLNDRQFVHDPQLGYSLPCVAGC) is SYT11 binding 2. Residues 313 to 377 (NRYQQYGAEE…CKEAYHEGEC (65 aa)) form an IBR-type zinc finger. Lys349 is covalently cross-linked (Glycyl lysine isopeptide (Lys-Gly) (interchain with G-Cter in ISG15)). 4 residues coordinate Zn(2+): Cys352, Cys360, Cys365, and Cys368. Lys369 participates in a covalent cross-link: Glycyl lysine isopeptide (Lys-Gly) (interchain with G-Cter in ISG15). Zn(2+) contacts are provided by His373 and Cys377. An REP region spans residues 378-410 (SAVFEASGTTTQAYRVDERAAEQARWEAASKET). The Zn(2+) site is built by Cys418 and Cys421. The segment at 418–449 (CPRCHVPVEKNGGCMHMKCPQPQCRLEWCWNC) adopts an RING-type 2; atypical zinc-finger fold. Residue Cys431 is part of the active site. Zn(2+) is bound by residues Cys436, Cys441, Cys446, Cys449, Cys457, and His461.

It belongs to the RBR family. Parkin subfamily. Forms an E3 ubiquitin ligase complex with UBE2L3 or UBE2L6. Mediates 'Lys-63'-linked polyubiquitination by associating with UBE2V1. Part of a SCF-like complex, consisting of PRKN, CUL1 and FBXW7. Interacts with SNCAIP. Binds to the C2A and C2B domains of SYT11. Interacts and regulates the turnover of SEPTIN5. Part of a complex, including STUB1, HSP70 and GPR37. The amount of STUB1 in the complex increases during ER stress. STUB1 promotes the dissociation of HSP70 from PRKN and GPR37, thus facilitating PRKN-mediated GPR37 ubiquitination. HSP70 transiently associates with unfolded GPR37 and inhibits the E3 activity of PRKN, whereas, STUB1 enhances the E3 activity of PRKN through promotion of dissociation of HSP70 from PRKN-GPR37 complexes. Interacts with PSMD4 and PACRG. Interacts with LRRK2. Interacts with RANBP2. Interacts with SUMO1 but not SUMO2, which promotes nuclear localization and autoubiquitination. Interacts (via first RING-type domain) with AIMP2 (via N-terminus). Interacts with PSMA7 and RNF41. Interacts with PINK1. Forms a complex with PINK1 and PARK7. Interacts with CHPF, the interaction with isoform 2 may facilitate PRKN transport into the mitochondria. Interacts with MFN2 (phosphorylated), promotes PRKN localization in dysfunctional depolarized mitochondria. Interacts with FBXO7; this promotes translocation to dysfunctional depolarized mitochondria. Interacts with ZNF746. Interacts with heat shock protein 70 family members, including HSPA1L, HSPA1A and HSPA8; interaction HSPA1L promotes translocation to damaged mitochondria. Interacts with BAG4 and, to a lesser extent, BAG5; interaction with BAG4 inhibits translocation to damaged mitochondria. Forms a complex with PRKN and PARK7. Interacts with AMBRA1. ISGylated. Conjugated to ubiquitin-like protein ISG15 upon IFN-beta stimulation. ISGylation positively regulates its E3 ligase activity. Post-translationally, auto-ubiquitinates in an E2-dependent manner leading to its own degradation. Also polyubiquitinated by RNF41 for proteasomal degradation. In terms of processing, S-nitrosylated. The inhibition of PRKN ubiquitin E3 ligase activity by S-nitrosylation could contribute to the degenerative process in PD by impairing the ubiquitination of PRKN substrates. Phosphorylated. Activation requires phosphorylation at Ser-65 by PINK1 and binding to PINK1 phosphorylated ubiquitin. Phosphorylation at Thr-175 by PINK1 and at Thr-217 is important for mitochondrial localization. As to expression, highly expressed in the brain including the substantia nigra. Expressed in heart, testis and skeletal muscle. Expression is down-regulated or absent in tumor biopsies, and absent in the brain of PARK2 patients. Overexpression protects dopamine neurons from kainate-mediated apoptosis. Found in serum (at protein level).

It localises to the cytoplasm. It is found in the cytosol. The protein resides in the nucleus. Its subcellular location is the endoplasmic reticulum. The protein localises to the mitochondrion. It localises to the mitochondrion outer membrane. It is found in the cell projection. The protein resides in the neuron projection. Its subcellular location is the postsynaptic density. The protein localises to the presynapse. It catalyses the reaction [E2 ubiquitin-conjugating enzyme]-S-ubiquitinyl-L-cysteine + [acceptor protein]-L-lysine = [E2 ubiquitin-conjugating enzyme]-L-cysteine + [acceptor protein]-N(6)-ubiquitinyl-L-lysine.. The protein operates within protein modification; protein ubiquitination. Its activity is regulated as follows. In the autoinhibited state the side chain of Phe-463 inserts into a hydrophobic groove in RING-0, occluding the ubiquitin acceptor site Cys-431, whereas the REP repressor element binds RING-1 and blocks its E2-binding site. Activation of PRKN requires 2 steps: (1) phosphorylation at Ser-65 by PINK1 and (2) binding to phosphorylated ubiquitin, leading to unlock repression of the catalytic Cys-431 by the RING-0 region via an allosteric mechanism and converting PRKN to its fully-active form. According to another report, phosphorylation at Ser-65 by PINK1 is not essential for activation and only binding to phosphorylated ubiquitin is essential to unlock repression. In addition, ISG15 conjugation positively regulates its ubiquitin E3 ligase activity by suppressing the intramolecular interaction that maintains its autoinhibited conformation. Its function is as follows. Functions within a multiprotein E3 ubiquitin ligase complex, catalyzing the covalent attachment of ubiquitin moieties onto substrate proteins. Substrates include SYT11 and VDAC1. Other substrates are BCL2, CCNE1, GPR37, RHOT1/MIRO1, MFN1, MFN2, STUB1, SNCAIP, SEPTIN5, TOMM20, USP30, ZNF746, MIRO1 and AIMP2. Mediates monoubiquitination as well as 'Lys-6', 'Lys-11', 'Lys-48'-linked and 'Lys-63'-linked polyubiquitination of substrates depending on the context. Participates in the removal and/or detoxification of abnormally folded or damaged protein by mediating 'Lys-63'-linked polyubiquitination of misfolded proteins such as PARK7: 'Lys-63'-linked polyubiquitinated misfolded proteins are then recognized by HDAC6, leading to their recruitment to aggresomes, followed by degradation. Mediates 'Lys-63'-linked polyubiquitination of a 22 kDa O-linked glycosylated isoform of SNCAIP, possibly playing a role in Lewy-body formation. Mediates monoubiquitination of BCL2, thereby acting as a positive regulator of autophagy. Protects against mitochondrial dysfunction during cellular stress, by acting downstream of PINK1 to coordinate mitochondrial quality control mechanisms that remove and replace dysfunctional mitochondrial components. Depending on the severity of mitochondrial damage and/or dysfunction, activity ranges from preventing apoptosis and stimulating mitochondrial biogenesis to regulating mitochondrial dynamics and eliminating severely damaged mitochondria via mitophagy. Activation and recruitment onto the outer membrane of damaged/dysfunctional mitochondria (OMM) requires PINK1-mediated phosphorylation of both PRKN and ubiquitin. After mitochondrial damage, functions with PINK1 to mediate the decision between mitophagy or preventing apoptosis by inducing either the poly- or monoubiquitination of VDAC1, respectively; polyubiquitination of VDAC1 promotes mitophagy, while monoubiquitination of VDAC1 decreases mitochondrial calcium influx which ultimately inhibits apoptosis. When cellular stress results in irreversible mitochondrial damage, promotes the autophagic degradation of dysfunctional depolarized mitochondria (mitophagy) by promoting the ubiquitination of mitochondrial proteins such as TOMM20, RHOT1/MIRO1, MFN1 and USP30. Preferentially assembles 'Lys-6'-, 'Lys-11'- and 'Lys-63'-linked polyubiquitin chains, leading to mitophagy. The PINK1-PRKN pathway also promotes fission of damaged mitochondria by PINK1-mediated phosphorylation which promotes the PRKN-dependent degradation of mitochondrial proteins involved in fission such as MFN2. This prevents the refusion of unhealthy mitochondria with the mitochondrial network or initiates mitochondrial fragmentation facilitating their later engulfment by autophagosomes. Regulates motility of damaged mitochondria via the ubiquitination and subsequent degradation of MIRO1 and MIRO2; in motor neurons, this likely inhibits mitochondrial intracellular anterograde transport along the axons which probably increases the chance of the mitochondria undergoing mitophagy in the soma. Involved in mitochondrial biogenesis via the 'Lys-48'-linked polyubiquitination of transcriptional repressor ZNF746/PARIS which leads to its subsequent proteasomal degradation and allows activation of the transcription factor PPARGC1A. Limits the production of reactive oxygen species (ROS). Regulates cyclin-E during neuronal apoptosis. In collaboration with CHPF isoform 2, may enhance cell viability and protect cells from oxidative stress. Independently of its ubiquitin ligase activity, protects from apoptosis by the transcriptional repression of p53/TP53. May protect neurons against alpha synuclein toxicity, proteasomal dysfunction, GPR37 accumulation, and kainate-induced excitotoxicity. May play a role in controlling neurotransmitter trafficking at the presynaptic terminal and in calcium-dependent exocytosis. May represent a tumor suppressor gene. This is E3 ubiquitin-protein ligase parkin from Homo sapiens (Human).